A 457-amino-acid chain; its full sequence is Cystathionine beta-lyase (457 aa).

The interval 1–41 is disordered; the sequence is MSTPNSDSPAAQAAKKVFSRLDLDGHNLPPSPAPSSPHNGR.

This sequence belongs to the trans-sulfuration enzymes family. It depends on pyridoxal 5'-phosphate as a cofactor.

It is found in the cytoplasm. The protein resides in the nucleus. The catalysed reaction is L,L-cystathionine + H2O = L-homocysteine + pyruvate + NH4(+). The enzyme catalyses an S-substituted L-cysteine + H2O = a thiol + pyruvate + NH4(+). It participates in amino-acid biosynthesis; L-methionine biosynthesis via de novo pathway; L-homocysteine from L-cystathionine: step 1/1. Functionally, involved in de novo synthesis of methionine. This is Cystathionine beta-lyase (met-2) from Neurospora crassa (strain ATCC 24698 / 74-OR23-1A / CBS 708.71 / DSM 1257 / FGSC 987).